The chain runs to 575 residues: Sulfite reductase [NADPH] hemoprotein beta-component (575 aa).

The [4Fe-4S] cluster site is built by Cys438, Cys444, Cys484, and Cys488. Cys488 contacts siroheme.

The protein belongs to the nitrite and sulfite reductase 4Fe-4S domain family. Alpha(8)-beta(8). The alpha component is a flavoprotein, the beta component is a hemoprotein. Siroheme serves as cofactor. The cofactor is [4Fe-4S] cluster.

It catalyses the reaction hydrogen sulfide + 3 NADP(+) + 3 H2O = sulfite + 3 NADPH + 4 H(+). The protein operates within sulfur metabolism; hydrogen sulfide biosynthesis; hydrogen sulfide from sulfite (NADPH route): step 1/1. In terms of biological role, component of the sulfite reductase complex that catalyzes the 6-electron reduction of sulfite to sulfide. This is one of several activities required for the biosynthesis of L-cysteine from sulfate. This chain is Sulfite reductase [NADPH] hemoprotein beta-component, found in Vibrio atlanticus (strain LGP32) (Vibrio splendidus (strain Mel32)).